A 343-amino-acid chain; its full sequence is UDP-glucuronic acid decarboxylase 6 (343 aa).

Residues 1-22 (MASNSSNGTTTTKPPPMPSPLR) are disordered. Ala-2 carries the N-acetylalanine modification. Position 62–87 (62–87 (DNYFTGSKDNLKKWIGHPRFELIRHD)) interacts with NAD(+). Residue Arg-171 coordinates substrate. The active-site Proton acceptor is Tyr-174. 174–178 (YDEGK) contacts NAD(+). Substrate is bound at residue Asn-203. Arg-215 serves as a coordination point for NAD(+). Substrate-binding positions include 216-220 (VVSNF), 233-240 (QKPGTQTR), and 300-304 (DPRQR).

This sequence belongs to the NAD(P)-dependent epimerase/dehydratase family. UDP-glucuronic acid decarboxylase subfamily. The cofactor is NAD(+).

The protein localises to the cytoplasm. It catalyses the reaction UDP-alpha-D-glucuronate + H(+) = UDP-alpha-D-xylose + CO2. It participates in nucleotide-sugar biosynthesis; UDP-alpha-D-xylose biosynthesis; UDP-alpha-D-xylose from UDP-alpha-D-glucuronate: step 1/1. In terms of biological role, catalyzes the NAD-dependent decarboxylation of UDP-glucuronic acid to UDP-xylose. Necessary for the biosynthesis of the core tetrasaccharide in glycosaminoglycan biosynthesis. This Arabidopsis thaliana (Mouse-ear cress) protein is UDP-glucuronic acid decarboxylase 6 (UXS6).